A 269-amino-acid chain; its full sequence is MINKTLLQKRFNVAAVSYDQYANVQKKMAHSLLSTLDRRYSANSSIRILELGCGTGYVTEQLSNLFPKAHITAIDFAESMIAVAKTRQNVKNVMFYCEDIERLQLEETYDVIISNATFQWLNDLKQVIRNLFHHLSIDGILLFSTFGQETFQELHTSFQRAKEEKNIQNETSIGQRFYSKNQLRHICEVETGDVHVSETCYIERFTEVREFLHSIRKVGATNSNEESYCQSPSLFRAMLRIYERDFTGNEGIMATYHALFMHITKEGKR.

It belongs to the methyltransferase superfamily.

It catalyses the reaction malonyl-[ACP] + S-adenosyl-L-methionine = malonyl-[ACP] methyl ester + S-adenosyl-L-homocysteine. It functions in the pathway cofactor biosynthesis; biotin biosynthesis. In terms of biological role, converts the free carboxyl group of a malonyl-thioester to its methyl ester by transfer of a methyl group from S-adenosyl-L-methionine (SAM). It allows to synthesize pimeloyl-ACP via the fatty acid synthetic pathway. The chain is Malonyl-[acyl-carrier protein] O-methyltransferase from Bacillus anthracis.